Here is a 437-residue protein sequence, read N- to C-terminus: Chromosomal replication initiator protein DnaA (437 aa).

Residues 1-74 (MNLAWNKILE…EACGDKIPVE (74 aa)) form a domain I, interacts with DnaA modulators region. The segment at 74-98 (EILIETKATSPLQSFLEKSFDQKDF) is domain II. Positions 99–315 (QFNPDYTFET…GALNDIYLYK (217 aa)) are domain III, AAA+ region. Positions 142, 144, 145, and 146 each coordinate ATP. A domain IV, binds dsDNA region spans residues 316–437 (KSYSLLFLNL…ERISSKYKLQ (122 aa)).

It belongs to the DnaA family. Oligomerizes as a right-handed, spiral filament on DNA at oriC.

It localises to the cytoplasm. In terms of biological role, plays an essential role in the initiation and regulation of chromosomal replication. ATP-DnaA binds to the origin of replication (oriC) to initiate formation of the DNA replication initiation complex once per cell cycle. Binds the DnaA box (a 9 base pair repeat at the origin) and separates the double-stranded (ds)DNA. Forms a right-handed helical filament on oriC DNA; dsDNA binds to the exterior of the filament while single-stranded (ss)DNA is stabiized in the filament's interior. The ATP-DnaA-oriC complex binds and stabilizes one strand of the AT-rich DNA unwinding element (DUE), permitting loading of DNA polymerase. After initiation quickly degrades to an ADP-DnaA complex that is not apt for DNA replication. Binds acidic phospholipids. The chain is Chromosomal replication initiator protein DnaA from Leptospira borgpetersenii serovar Hardjo-bovis (strain JB197).